Consider the following 439-residue polypeptide: Putative phosphatidate cytidylyltransferase (439 aa).

The tract at residues 1-37 (MARKRTNKRNNSDKENGNVGVVQNKDSASSKTTEPAR) is disordered. Residue Ser-12 is modified to Phosphoserine. Over residues 24 to 33 (NKDSASSKTT) the composition is skewed to polar residues. Helical transmembrane passes span 52–71 (FITR…TALA), 76–98 (WVVL…IASV), 110–130 (FINW…SIYA), 145–165 (LVLH…VLFV), 180–199 (FCWT…FMIN), 245–265 (GFLG…YVLM), and 321–341 (FHLA…GFFA).

The protein belongs to the CDS family. Mg(2+) is required as a cofactor.

Its subcellular location is the endoplasmic reticulum membrane. It carries out the reaction a 1,2-diacyl-sn-glycero-3-phosphate + CTP + H(+) = a CDP-1,2-diacyl-sn-glycerol + diphosphate. It functions in the pathway phospholipid metabolism; CDP-diacylglycerol biosynthesis; CDP-diacylglycerol from sn-glycerol 3-phosphate: step 3/3. Supplies CDP-diacylglycerol, which may play an important role as both a precursor to phosphoinositide biosynthesis in the plasma membrane and as a negative effector of phosphatidylinositol 4-kinase activity, thereby exerting an effect on cell proliferation via a lipid-dependent signal transduction cascade. This chain is Putative phosphatidate cytidylyltransferase, found in Schizosaccharomyces pombe (strain 972 / ATCC 24843) (Fission yeast).